We begin with the raw amino-acid sequence, 66 residues long: MKYTELKDKSIKELEELLHAKKAELFELHVKLKAMQLSNPNEIKKARRNIARINTAINAYYSSSVE.

The protein belongs to the universal ribosomal protein uL29 family.

The sequence is that of Large ribosomal subunit protein uL29 from Helicobacter pylori (strain Shi470).